Reading from the N-terminus, the 345-residue chain is Anthranilate phosphoribosyltransferase (345 aa).

5-phospho-alpha-D-ribose 1-diphosphate contacts are provided by residues glycine 88, 91 to 92 (GD), threonine 96, 98 to 101 (NIST), 116 to 124 (KHGNRSASG), and serine 128. Glycine 88 lines the anthranilate pocket. Serine 100 lines the Mg(2+) pocket. Asparagine 119 contributes to the anthranilate binding site. Arginine 174 serves as a coordination point for anthranilate. Residues aspartate 233 and glutamate 234 each contribute to the Mg(2+) site.

Belongs to the anthranilate phosphoribosyltransferase family. As to quaternary structure, homodimer. Mg(2+) serves as cofactor.

The enzyme catalyses N-(5-phospho-beta-D-ribosyl)anthranilate + diphosphate = 5-phospho-alpha-D-ribose 1-diphosphate + anthranilate. It participates in amino-acid biosynthesis; L-tryptophan biosynthesis; L-tryptophan from chorismate: step 2/5. Catalyzes the transfer of the phosphoribosyl group of 5-phosphorylribose-1-pyrophosphate (PRPP) to anthranilate to yield N-(5'-phosphoribosyl)-anthranilate (PRA). The sequence is that of Anthranilate phosphoribosyltransferase from Prochlorococcus marinus (strain NATL1A).